The sequence spans 342 residues: Glycerol-1-phosphate dehydrogenase [NAD(P)+] (342 aa).

Residues 84–88 (GRPID) and 106–109 (TSAS) each bind NAD(+). D111 is a binding site for substrate. NAD(+) is bound at residue S115. D160 contributes to the substrate binding site. Zn(2+) is bound by residues D160 and H241. H245 lines the substrate pocket. Position 260 (H260) interacts with Zn(2+).

This sequence belongs to the glycerol-1-phosphate dehydrogenase family. In terms of assembly, homodimer. Zn(2+) is required as a cofactor.

Its subcellular location is the cytoplasm. It catalyses the reaction sn-glycerol 1-phosphate + NAD(+) = dihydroxyacetone phosphate + NADH + H(+). The catalysed reaction is sn-glycerol 1-phosphate + NADP(+) = dihydroxyacetone phosphate + NADPH + H(+). Its pathway is membrane lipid metabolism; glycerophospholipid metabolism. Catalyzes the NAD(P)H-dependent reduction of dihydroxyacetonephosphate (DHAP or glycerone phosphate) to glycerol 1-phosphate (G1P). The G1P thus generated is used as the glycerophosphate backbone of phospholipids in the cellular membranes of Archaea. This Pyrobaculum islandicum (strain DSM 4184 / JCM 9189 / GEO3) protein is Glycerol-1-phosphate dehydrogenase [NAD(P)+].